The sequence spans 466 residues: Alpha-1A adrenergic receptor (466 aa).

Topologically, residues 1–25 are extracellular; the sequence is MVFLSGNASDSSNCTQPPAPVNIPK. 2 N-linked (GlcNAc...) asparagine glycosylation sites follow: Asn-7 and Asn-13. A helical transmembrane segment spans residues 26 to 51; that stretch reads AILLGVILGVLILFGVPGNILVILSV. Residues 52–63 lie on the Cytoplasmic side of the membrane; sequence ACHRHLHSVTHY. A helical transmembrane segment spans residues 64-89; sequence YIVNLAVADLLLTSTVLPFSAIFEIL. The Extracellular segment spans residues 90-99; it reads GYWAFGRVFC. The helical transmembrane segment at 100-122 threads the bilayer; the sequence is NIWAAVDVLCCTASIMSLCIISI. At 123-143 the chain is on the cytoplasmic side; sequence DRYIGVSYPLRYPTIVTQRRG. A helical membrane pass occupies residues 144–168; that stretch reads LRALLCLWALSLVISIGPLFGWRQP. Topologically, residues 169-181 are extracellular; it reads APQDETICQINED. The helical transmembrane segment at 182–205 threads the bilayer; the sequence is PSYVLFSALGSFYVPLAIILVMYC. The Cytoplasmic segment spans residues 206–272; sequence RVYVVAKRES…KFSREKKAAK (67 aa). A helical transmembrane segment spans residues 273–297; that stretch reads TLGIVVGCFVLCWLPFFLVMPIGSF. Over 298–304 the chain is Extracellular; that stretch reads FPDFKPS. The chain crosses the membrane as a helical span at residues 305–329; it reads ETVFKIVFWLGYLNSCINPIIYPCS. Residues 330-466 are Cytoplasmic-facing; the sequence is SQEFKKAFQN…ISLSENGEEV (137 aa). A Nuclear localization signal motif is present at residues 334–349; the sequence is KKAFQNVLKIQCLRRK. The S-palmitoyl cysteine moiety is linked to residue Cys-345.

It belongs to the G-protein coupled receptor 1 family. Adrenergic receptor subfamily. ADRA1A sub-subfamily. Homo- and heterooligomer. Heterooligomerizes with ADRA1B homooligomers in cardiac myocytes. Interacts with CAVIN4.

It localises to the nucleus membrane. It is found in the cell membrane. The protein localises to the cytoplasm. Its subcellular location is the membrane. The protein resides in the caveola. In terms of biological role, this alpha-adrenergic receptor mediates its action by association with G proteins that activate a phosphatidylinositol-calcium second messenger system. Its effect is mediated by G(q) and G(11) proteins. Nuclear ADRA1A-ADRA1B heterooligomers regulate phenylephrine (PE)-stimulated ERK signaling in cardiac myocytes. The polypeptide is Alpha-1A adrenergic receptor (ADRA1A) (Cavia porcellus (Guinea pig)).